A 313-amino-acid chain; its full sequence is ADP-L-glycero-D-manno-heptose-6-epimerase (313 aa).

Residues Met-10 to Ile-11, Asp-31 to Asn-32, Lys-38, Arg-53, Glu-75 to Ser-79, and Asn-92 each bind NADP(+). Tyr-139 (proton acceptor) is an active-site residue. Lys-143 is a binding site for NADP(+). Position 174 (Asn-174) interacts with substrate. Val-175 and Lys-183 together coordinate NADP(+). Lys-183 serves as the catalytic Proton acceptor. Substrate is bound by residues Ser-185, His-192, Phe-206–Ser-209, Arg-214, and Tyr-277.

The protein belongs to the NAD(P)-dependent epimerase/dehydratase family. HldD subfamily. In terms of assembly, homopentamer. NADP(+) serves as cofactor.

The catalysed reaction is ADP-D-glycero-beta-D-manno-heptose = ADP-L-glycero-beta-D-manno-heptose. Its pathway is nucleotide-sugar biosynthesis; ADP-L-glycero-beta-D-manno-heptose biosynthesis; ADP-L-glycero-beta-D-manno-heptose from D-glycero-beta-D-manno-heptose 7-phosphate: step 4/4. Functionally, catalyzes the interconversion between ADP-D-glycero-beta-D-manno-heptose and ADP-L-glycero-beta-D-manno-heptose via an epimerization at carbon 6 of the heptose. The chain is ADP-L-glycero-D-manno-heptose-6-epimerase from Vibrio campbellii (strain ATCC BAA-1116).